The chain runs to 182 residues: MDPLMAHQRAQDAFAALLANVRADQLGGPTPCSEWTINDLIEHVVGGNEQVGRWAASPIEPPARPDGLVAAHQAAAAVAHEIFAAPGGMSATFKLPLGEVPGQVFIGLRTTDVLTHAWDLAAATGQSTDLDPELAVERLAAARALVGPQFRGPGKPFADEKPCPRERPPADQLAAFLGRTVR.

The interval 151-172 (RGPGKPFADEKPCPRERPPADQ) is disordered. The span at 157–169 (FADEKPCPRERPP) shows a compositional bias: basic and acidic residues.

This is an uncharacterized protein from Mycobacterium tuberculosis (strain CDC 1551 / Oshkosh).